The chain runs to 155 residues: Small ribosomal subunit protein uS15 (155 aa).

Over residues 1–10 (MARMHTRRRG) the composition is skewed to basic residues. The tract at residues 1-66 (MARMHTRRRG…EGVQGTPVPD (66 aa)) is disordered. The span at 21 to 33 (EPPEWSDVDEDAI) shows a compositional bias: acidic residues. Residues 34–45 (EERVVELAEQGH) show a composition bias toward basic and acidic residues.

Belongs to the universal ribosomal protein uS15 family. Part of the 30S ribosomal subunit.

This is Small ribosomal subunit protein uS15 from Halobacterium salinarum (strain ATCC 700922 / JCM 11081 / NRC-1) (Halobacterium halobium).